An 817-amino-acid chain; its full sequence is MANNVNLLYGLPQRVITLPANLIQSKSKIFIGNGDPNCIIGNNCDMYIDKNSNRIFYKCGCNWLLTGTIMGDNGFIGLRGSKGDTGNKGEIGDNGENGDIGQIGDNGSIGSKGIKGMNGFNGSKGIKGDKGTDGIKGDKGQDNFGSKGQKGETGSKGDDGIKGITGSKGFKGDPGTKGENGINGTKGLKGSQGDLGTKGDDGIKGIIGSKGIKGDPGNKGEDGIKGTNGLKGSKGETGSKGDDGTKGITGLKGTKGNSGSKGDDGDKGIQGLKGEFGTKGNVGDKGDTGINGEKGSDGDKGNKGLDGIKGDLGDDGIKGDKGIKGLKGDTGNSDKGDKGSKGDSNFSKGGIGDKGSKGDNGSKGESGDKGIFGLKGSKGDIGDKGEKGDLGDTGLKGSKGLKGSKGDKGLVNVKGENGFVGDLGSKGSKGDKGESGDKGDIGIKGDKGAKGVTGDKGDKGTKGFIGNVGFKGDTGDKGIIGDNGSKGIKGSSNNKGDKGDKGNTGDKGITNTKGIKGDKGIKGSKGDLGSVGEKGEKGTKGDIGTKGETGLKGIIGDKGELGSKGIKGLSESFIESFYQEIPGTFVSTVPDGAVFGYLSAAGGGGGGGGIELSSLAGGGGGGSGCFYLLPLTVYPGSQFTGTIGQGGSGSTISAVLATKGSDTVINYGTLTFIAHGGFPGSSTLELGGNGDTVTYPLPVTPAPGGTGGNMTNGSNGSTSIFMFSGAGGGASGLNSGFNGGNVGPYVGGTSSPQIAGGGGGASAFGNGGRGGNTTQAATKGEYGSGGGGGSEFSPSGSTNGGDGGDGFVRIDYFMVPR.

3 Collagen-like domains span residues 83–142 (GDTG…KGQD), 145–264 (GSKG…KGDD), and 268–327 (GIQG…KGLK). Disordered stretches follow at residues 87 to 107 (NKGE…GDNG), 120 to 458 (FNGS…DKGD), and 479 to 543 (IIGD…KGDI). 2 N-linked (GlcNAc...) asparagine; by host glycosylation sites follow: Asn106 and Asn121. Composition is skewed to basic and acidic residues over residues 126-141 (IKGD…DKGQ) and 149-161 (QKGE…DDGI). A glycan (N-linked (GlcNAc...) asparagine; by host) is linked at Asn183. 2 stretches are compositionally biased toward basic and acidic residues: residues 212-224 (IKGD…EDGI) and 233-245 (SKGE…DDGT). Positions 246-260 (KGITGLKGTKGNSGS) are enriched in low complexity. A compositionally biased stretch (basic and acidic residues) spans 294-341 (KGSDGDKGNKGLDGIKGDLGDDGIKGDKGIKGLKGDTGNSDKGDKGSK). N-linked (GlcNAc...) asparagine; by host glycosylation is found at Asn345 and Asn360. Collagen-like domains lie at 352–411 (GDKG…KGLV) and 430–489 (GDKG…KGIK). 3 stretches are compositionally biased toward basic and acidic residues: residues 354-368 (KGSK…ESGD), 377-390 (SKGD…KGDL), and 428-458 (SKGD…DKGD). Over residues 480-494 (IGDNGSKGIKGSSNN) the composition is skewed to low complexity. Asn483 carries N-linked (GlcNAc...) asparagine; by host glycosylation. Composition is skewed to basic and acidic residues over residues 495–504 (KGDKGDKGNT), 515–525 (IKGDKGIKGSK), and 533–543 (EKGEKGTKGDI). The Collagen-like 6 domain maps to 512–570 (TKGIKGDKGIKGSKGDLGSVGEKGEKGTKGDIGTKGETGLKGIIGDKGELGSKGIKGLS). N-linked (GlcNAc...) asparagine; by host glycosylation is found at Asn709, Asn712, and Asn715. Residues 757–771 (GGGGASAFGNGGRGG) are compositionally biased toward gly residues. The tract at residues 757–804 (GGGGASAFGNGGRGGNTTQAATKGEYGSGGGGGSEFSPSGSTNGGDGG) is disordered. Asn772 carries N-linked (GlcNAc...) asparagine; by host glycosylation.

In terms of processing, may be hydroxylated on lysine by the viral-encoded procollagen-lysine,2-oxoglutarate 5-dioxygenase.

It localises to the virion. Functionally, may participate in the formation of a layer of cross-linked glycosylated fibrils at the viral surface thus giving it a hairy-like appearance. This Acanthamoeba polyphaga (Amoeba) protein is Collagen-like protein 4.